The sequence spans 229 residues: Synaptogyrin-3 (229 aa).

Met1 is modified (N-acetylmethionine). The 153-residue stretch at 20–172 folds into the MARVEL domain; sequence FARRPQTLLR…LTVKALQRFR (153 aa). A run of 4 helical transmembrane segments spans residues 30–50, 70–90, 105–125, and 148–168; these read VASWVFSIAVFGPIVNEGYVN, FGVALGLGAFLACSCFLLLDV, VLLDLGFSGLWSFLWFVGFCF, and AVITFSFFSILSWVALTVKAL.

It belongs to the synaptogyrin family. As to quaternary structure, interacts (via N-terminus) with SLC6A3 (via N-terminus). May interact with VMAT2.

It localises to the cytoplasmic vesicle. It is found in the secretory vesicle. The protein resides in the synaptic vesicle membrane. Its subcellular location is the synapse. May play a role in regulated exocytosis. May indirectly regulate the activity of the plasma membrane dopamine transporter SLC6A3 and thereby regulate dopamine transport back from the synaptic cleft into the presynaptic terminal. This is Synaptogyrin-3 from Bos taurus (Bovine).